A 59-amino-acid chain; its full sequence is Large ribosomal subunit protein bL32 (59 aa).

A disordered region spans residues Met-1 to Asp-20. The span at Lys-7 to His-19 shows a compositional bias: basic residues.

It belongs to the bacterial ribosomal protein bL32 family.

The sequence is that of Large ribosomal subunit protein bL32 from Wigglesworthia glossinidia brevipalpis.